The following is a 431-amino-acid chain: DNA polymerase delta subunit 2 (431 aa).

It belongs to the DNA polymerase delta/II small subunit family. In terms of assembly, component of both the DNA polymerase delta and DNA polymerase zeta complexes. The DNA polymerase delta complex consisting of three subunits: the catalytic subunit PolD1 and two accessory subunits PolD2/Pol31 and PolD3/Pol32. Within the delta complex, interacts with both PolD1 and PolD3, and is able to interact with PolD1 in the absence of PolD3. Component of the DNA polymerase zeta complex consisting of four subunits: the catalytic subunit PolZ1 and three accessory subunits PolZ2/Rev7, PolD2/Pol31 and PolD3/Pol32. Expressed in ovaries and embryos (at the protein level).

It localises to the nucleus. The protein resides in the nucleoplasm. Its function is as follows. Accessory component of both the DNA polymerase delta complex and possibly the DNA polymerase zeta complex. As a component of the delta complex, participates in high fidelity genome replication, including lagging strand synthesis, DNA recombination and repair. Appears to promote the function of the DNA pol-delta complex accessory subunit PolD3 in both embryonic and postembryonic somatic cells. This Drosophila melanogaster (Fruit fly) protein is DNA polymerase delta subunit 2.